Consider the following 1050-residue polypeptide: Bifunctional glutamine synthetase adenylyltransferase/adenylyl-removing enzyme (1050 aa).

An adenylyl removase region spans residues Met-1 to Leu-531. The adenylyl transferase stretch occupies residues Asn-537–Leu-1050.

Belongs to the GlnE family. Mg(2+) serves as cofactor.

It catalyses the reaction [glutamine synthetase]-O(4)-(5'-adenylyl)-L-tyrosine + phosphate = [glutamine synthetase]-L-tyrosine + ADP. The enzyme catalyses [glutamine synthetase]-L-tyrosine + ATP = [glutamine synthetase]-O(4)-(5'-adenylyl)-L-tyrosine + diphosphate. Its function is as follows. Involved in the regulation of glutamine synthetase GlnA, a key enzyme in the process to assimilate ammonia. When cellular nitrogen levels are high, the C-terminal adenylyl transferase (AT) inactivates GlnA by covalent transfer of an adenylyl group from ATP to specific tyrosine residue of GlnA, thus reducing its activity. Conversely, when nitrogen levels are low, the N-terminal adenylyl removase (AR) activates GlnA by removing the adenylyl group by phosphorolysis, increasing its activity. The regulatory region of GlnE binds the signal transduction protein PII (GlnB) which indicates the nitrogen status of the cell. The chain is Bifunctional glutamine synthetase adenylyltransferase/adenylyl-removing enzyme from Corynebacterium efficiens (strain DSM 44549 / YS-314 / AJ 12310 / JCM 11189 / NBRC 100395).